A 139-amino-acid polypeptide reads, in one-letter code: Hydrogenase maturation factor HypA (139 aa).

Histidine 2 lines the Ni(2+) pocket. Zn(2+) is bound by residues cysteine 75, cysteine 78, cysteine 111, and cysteine 114.

This sequence belongs to the HypA/HybF family.

Its function is as follows. Involved in the maturation of [NiFe] hydrogenases. Required for nickel insertion into the metal center of the hydrogenase. The sequence is that of Hydrogenase maturation factor HypA from Ignicoccus hospitalis (strain KIN4/I / DSM 18386 / JCM 14125).